The following is a 222-amino-acid chain: Large ribosomal subunit protein uL4 (222 aa).

The segment at 50-72 (TRGRSEVSHSTRKPFRQKGTGNA) is disordered.

It belongs to the universal ribosomal protein uL4 family. In terms of assembly, part of the 50S ribosomal subunit.

Functionally, one of the primary rRNA binding proteins, this protein initially binds near the 5'-end of the 23S rRNA. It is important during the early stages of 50S assembly. It makes multiple contacts with different domains of the 23S rRNA in the assembled 50S subunit and ribosome. Its function is as follows. Forms part of the polypeptide exit tunnel. This chain is Large ribosomal subunit protein uL4, found in Chlamydia muridarum (strain MoPn / Nigg).